The sequence spans 2885 residues: Chromodomain-helicase-DNA-binding protein 9 (2885 aa).

The disordered stretch occupies residues Q173–Q195. A Glycyl lysine isopeptide (Lys-Gly) (interchain with G-Cter in SUMO2) cross-link involves residue K197. Disordered stretches follow at residues C242–S263, S283–Y347, and C479–Q677. Polar residues-rich tracts occupy residues S243–S263 and S283–S310. Residues L323–N334 are compositionally biased toward low complexity. Composition is skewed to polar residues over residues F335–Y347 and Q483–R505. K498 carries the post-translational modification N6-acetyllysine. Composition is skewed to basic and acidic residues over residues M507 to N526 and A534 to I544. Position 549 is a phosphoserine (S549). Basic and acidic residues predominate over residues K572–K592. Residue K595 forms a Glycyl lysine isopeptide (Lys-Gly) (interchain with G-Cter in SUMO2) linkage. Phosphoserine is present on S610. Over residues A617 to S630 the composition is skewed to basic and acidic residues. A compositionally biased stretch (basic residues) spans Q631–K643. Basic and acidic residues predominate over residues Y644 to G659. 2 Chromo domains span residues A689–A760 and V772–R838. The short motif at L867–L871 is the LXXLL motif 1 element. Residues L871 to L1045 enclose the Helicase ATP-binding domain. An ATP-binding site is contributed by D884 to T891. Residues D996 to H999 carry the DEAH box motif. An LXXLL motif 2 motif is present at residues L1035–L1039. Residues L1185–R1336 form the Helicase C-terminal domain. Positions K1460–D1484 are disordered. Positions A1464–G1473 are enriched in acidic residues. Phosphoserine occurs at positions 1467 and 1471. Over residues E1474–D1484 the composition is skewed to basic and acidic residues. Glycyl lysine isopeptide (Lys-Gly) (interchain with G-Cter in SUMO2) cross-links involve residues K1587, K1737, and K1902. Residue S2025 is modified to Phosphoserine. The LXXLL motif 3 motif lies at L2030–L2034. A Glycyl lysine isopeptide (Lys-Gly) (interchain with G-Cter in SUMO2) cross-link involves residue K2037. The tract at residues V2046–G2238 is disordered. Phosphoserine occurs at positions 2057 and 2058. K2073 is covalently cross-linked (Glycyl lysine isopeptide (Lys-Gly) (interchain with G-Cter in SUMO2)). Phosphoserine occurs at positions 2074 and 2078. The span at V2083–K2092 shows a compositional bias: polar residues. Positions S2093–M2103 are enriched in basic and acidic residues. Over residues S2127 to S2193 the composition is skewed to low complexity. Over residues D2201–D2215 the composition is skewed to basic and acidic residues. Positions A2220–G2238 are enriched in polar residues. The tract at residues Q2331–P2471 is binds A/T-rich DNA. Glycyl lysine isopeptide (Lys-Gly) (interchain with G-Cter in SUMO2) cross-links involve residues K2349, K2355, and K2360. Positions K2428–R2435 are a.T hook-like. A disordered region spans residues T2473 to P2494. The span at D2484–P2494 shows a compositional bias: basic and acidic residues. An LXXLL motif 4 motif is present at residues L2710 to L2714. The disordered stretch occupies residues A2724 to A2770. A compositionally biased stretch (basic and acidic residues) spans A2728–E2747. The LXXLL motif 5 motif lies at L2782 to L2786. Positions K2818–G2847 are enriched in basic and acidic residues. Positions K2818–D2885 are disordered. A Glycyl lysine isopeptide (Lys-Gly) (interchain with G-Cter in SUMO2) cross-link involves residue K2833. Positions R2864–S2876 are enriched in low complexity.

The protein belongs to the SNF2/RAD54 helicase family. In terms of assembly, interacts with PPARA. Probably interacts with ESR1 and NR1I3. In terms of processing, phosphorylated on serine and tyrosine residues. Expressed in osteoprogenitor cells during development and in mature bone (at protein level).

Its subcellular location is the cytoplasm. It localises to the nucleus. It catalyses the reaction ATP + H2O = ADP + phosphate + H(+). Probable ATP-dependent chromatin-remodeling factor. Acts as a transcriptional coactivator for PPARA and possibly other nuclear receptors. Has DNA-dependent ATPase activity and binds to A/T-rich DNA. Associates with A/T-rich regulatory regions in promoters of genes that participate in the differentiation of progenitors during osteogenesis. This chain is Chromodomain-helicase-DNA-binding protein 9 (Chd9), found in Mus musculus (Mouse).